The sequence spans 241 residues: MAKIHMVLQGKGGVGKSMIAATIAQYKAGKGQKPLCIDTDPVNATFEGYKALNVRRLNIMDGDDINTRNFDALVEMIASAEGDVIIDNGASSFVPLSHYLISNQVPALLQDMGHELVVHTVVTGGQALVDTVSGFAQLASQFPAECLFVVWLNPYWGPIEHEGKGFEQLKAYTANKGRVSAIIQIPALKEETYGRDFAEMLQDRRTFDEALADSALTIMTRQRLKIVKTQLFAQLENAAVL.

To plasmid IncP-alpha RP4 TraL.

The sequence is that of Protein TraL (traL) from Escherichia coli.